The sequence spans 815 residues: Leucine--tRNA ligase (815 aa).

The 'HIGH' region motif lies at 40-50; sequence PYPSGRIHMGH. Positions 583-587 match the 'KMSKS' region motif; the sequence is KMSKS. Lys-586 is an ATP binding site.

The protein belongs to the class-I aminoacyl-tRNA synthetase family.

The protein localises to the cytoplasm. It catalyses the reaction tRNA(Leu) + L-leucine + ATP = L-leucyl-tRNA(Leu) + AMP + diphosphate. This chain is Leucine--tRNA ligase, found in Nitratiruptor sp. (strain SB155-2).